Consider the following 148-residue polypeptide: MNNKSLIFLAIKSLDIQNQTCGTINTVSLNFDDQLNQLIIDSRIQSDKDLKIIISKVLNSASQSSLHDSNLANNYNRRFLYYFKKMSFFQYIEKSVYENSILIENLGIVGLYLLYLLIECNGLFRIWVYYKIYNFEHLIKLVETKNNL.

It is found in the plastid. The protein localises to the chloroplast. This is an uncharacterized protein from Porphyra purpurea (Red seaweed).